The primary structure comprises 346 residues: Hexosaminidase D (346 aa).

E141 serves as the catalytic Proton donor.

The protein belongs to the glycosyl hydrolase 20 family. As to quaternary structure, homodimer; disulfide-linked.

The protein resides in the cytoplasm. It localises to the nucleus. It is found in the extracellular vesicle. It catalyses the reaction Hydrolysis of terminal non-reducing N-acetyl-D-hexosamine residues in N-acetyl-beta-D-hexosaminides.. With respect to regulation, inhibited by O-(2-acetamido-2-deoxy-D-glucopyranosylidene)amino N-phenylcarbamate (PUGNAc). Inhibited by galacto-NAG-thiazoline. Has hexosaminidase activity. Responsible for the cleavage of the monosaccharides N-acetylglucosamine (GlcNAc) and N-acetylgalactosamine (GalNAc) from cellular substrates. Has a preference for galactosaminide over glucosaminide substrates. The chain is Hexosaminidase D from Bos taurus (Bovine).